Here is a 395-residue protein sequence, read N- to C-terminus: Elongation factor Tu (395 aa).

In terms of domain architecture, tr-type G spans lysine 10 to glutamate 204. Positions glycine 19–threonine 26 are G1. A GTP-binding site is contributed by glycine 19–threonine 26. Threonine 26 is a Mg(2+) binding site. Positions glycine 60–asparagine 64 are G2. A G3 region spans residues aspartate 81–glycine 84. Residues aspartate 81–histidine 85 and asparagine 136–aspartate 139 each bind GTP. A G4 region spans residues asparagine 136–aspartate 139. Residues serine 174 to leucine 176 are G5.

It belongs to the TRAFAC class translation factor GTPase superfamily. Classic translation factor GTPase family. EF-Tu/EF-1A subfamily. In terms of assembly, monomer.

The protein localises to the cytoplasm. The catalysed reaction is GTP + H2O = GDP + phosphate + H(+). Functionally, GTP hydrolase that promotes the GTP-dependent binding of aminoacyl-tRNA to the A-site of ribosomes during protein biosynthesis. This is Elongation factor Tu from Porphyromonas gingivalis (strain ATCC 33277 / DSM 20709 / CIP 103683 / JCM 12257 / NCTC 11834 / 2561).